The following is a 391-amino-acid chain: Ferrochelatase (391 aa).

2 residues coordinate Fe cation: His196 and Glu281.

The protein belongs to the ferrochelatase family.

The protein localises to the cytoplasm. It carries out the reaction heme b + 2 H(+) = protoporphyrin IX + Fe(2+). It functions in the pathway porphyrin-containing compound metabolism; protoheme biosynthesis; protoheme from protoporphyrin-IX: step 1/1. Functionally, catalyzes the ferrous insertion into protoporphyrin IX. The protein is Ferrochelatase of Parasynechococcus marenigrum (strain WH8102).